Here is a 278-residue protein sequence, read N- to C-terminus: 4-diphosphocytidyl-2-C-methyl-D-erythritol kinase (278 aa).

The active site involves K10. Residue 93–103 (PMGGGLGGGSS) participates in ATP binding. Residue D135 is part of the active site.

The protein belongs to the GHMP kinase family. IspE subfamily.

It carries out the reaction 4-CDP-2-C-methyl-D-erythritol + ATP = 4-CDP-2-C-methyl-D-erythritol 2-phosphate + ADP + H(+). The protein operates within isoprenoid biosynthesis; isopentenyl diphosphate biosynthesis via DXP pathway; isopentenyl diphosphate from 1-deoxy-D-xylulose 5-phosphate: step 3/6. Functionally, catalyzes the phosphorylation of the position 2 hydroxy group of 4-diphosphocytidyl-2C-methyl-D-erythritol. The chain is 4-diphosphocytidyl-2-C-methyl-D-erythritol kinase from Thiobacillus denitrificans (strain ATCC 25259 / T1).